A 90-amino-acid chain; its full sequence is Protein AF1q (90 aa).

Positions 24–32 match the Nuclear export signal motif; it reads LSELEGLGL. At Ser84 the chain carries Phosphoserine.

Belongs to the MLLT11 family. Interacts with HSPA8 and LAMP2 isoform A; the interaction may target MLLT11 for degradation via chaperone-mediated autophagy. Interacts with TCF7. Ubiquitinated, leading to degradation. Expressed in myoepithelial cells of normal breast tissue (at protein level). Highly expressed in thymus. Expressed in colon, small intestine, prostate and ovary. Not detected in peripheral blood lymphocytes and spleen.

Its subcellular location is the nucleus. It localises to the cytoplasm. It is found in the cytoskeleton. The protein localises to the microtubule organizing center. The protein resides in the centrosome. Cofactor for the transcription factor TCF7. Involved in regulation of lymphoid development by driving multipotent hematopoietic progenitor cells towards a T cell fate. This chain is Protein AF1q (MLLT11), found in Homo sapiens (Human).